The sequence spans 114 residues: Small nuclear ribonucleoprotein SmD1a (114 aa).

Residues 2–74 enclose the Sm domain; sequence KLVRFLMKLN…IRYYILPDSL (73 aa). The interval 87–114 is disordered; the sequence is VKPKKPVAGKAVGRGRGRGRGRGRGRGR. Repeat copies occupy residues 99–100, 101–102, 103–104, 105–106, 107–108, 109–110, 111–112, and 113–114. The interval 99–114 is 8 X 2 AA tandem repeats of G-R; that stretch reads GRGRGRGRGRGRGRGR.

Belongs to the snRNP core protein family.

The protein localises to the nucleus. It is found in the nucleus speckle. Its subcellular location is the nucleolus. In terms of biological role, involved in splicing regulation. Facilitates post-transcriptional gene silencing (PTGS) by limiting the degradation of transgene aberrant RNAs by the RNA quality control (RQC) machinery, thus favoring their entry into cytoplasmic siRNA bodies where they can trigger PTGS. Does not participate in the production of small RNAs. The sequence is that of Small nuclear ribonucleoprotein SmD1a from Arabidopsis thaliana (Mouse-ear cress).